The sequence spans 288 residues: Eukaryotic translation initiation factor 3 subunit F-2 (288 aa).

Positions V12–G149 constitute an MPN domain.

This sequence belongs to the eIF-3 subunit F family. In terms of assembly, component of the eukaryotic translation initiation factor 3 (eIF-3) complex. The eIF-3 complex interacts with pix.

It is found in the cytoplasm. Its function is as follows. Component of the eukaryotic translation initiation factor 3 (eIF-3) complex, which is involved in protein synthesis of a specialized repertoire of mRNAs and, together with other initiation factors, stimulates binding of mRNA and methionyl-tRNAi to the 40S ribosome. The eIF-3 complex specifically targets and initiates translation of a subset of mRNAs involved in cell proliferation. The protein is Eukaryotic translation initiation factor 3 subunit F-2 of Drosophila persimilis (Fruit fly).